A 1003-amino-acid chain; its full sequence is DNA topoisomerase 3-alpha (1003 aa).

The 145-residue stretch at 35 to 179 (KVLCVAEKND…NLRVLRARFS (145 aa)) folds into the Toprim domain. Positions 197–617 (DQRVSDAVDV…QQVQKYKQVF (421 aa)) constitute a Topo IA-type catalytic domain. Catalysis depends on Y362, which acts as the O-(5'-phospho-DNA)-tyrosine intermediate. A disordered region spans residues 400-426 (GGPTPRNGSKSDQAHPPIHPTKYTSGL). A C4-type zinc finger spans residues 658 to 685 (CPQCNKDMVLKTKKSGGFYLSCMGFPEC). Residues C815, C817, C840, and C845 each contribute to the Zn(2+) site. A GRF-type 1 zinc finger spans residues 815 to 854 (CNCGREAVLLTVRKQGPNQGRHFYKCSNGDCNFFLWADSS). Residues 856–888 (STGGGTPTSASGPPGSSVGCPSSVGSHMDGFGS) are disordered. A compositionally biased stretch (low complexity) spans 862–888 (PTSASGPPGSSVGCPSSVGSHMDGFGS). 4 residues coordinate Zn(2+): C899, C901, C924, and C932. The segment at 899 to 941 (CLCGQPAVTRTVQKDGPNKGRQFHTCAKPREQQCGFFQWVDEN) adopts a GRF-type 2 zinc-finger fold. The tract at residues 946 to 991 (SFAAPAWPGGRGKAQRPEAASKRPRAGSSDAGSTVKKPRKCSLCHQ) is disordered.

The protein belongs to the type IA topoisomerase family. Binds ssDNA. Interacts (via N-terminal region) with BLM; the interaction is direct. Directly interacts with RMI1. Component of the RMI complex, containing at least TOP3A, RMI1 and RMI2. The RMI complex interacts with BLM. It depends on Mg(2+) as a cofactor. As to expression, highly expressed in testis.

Its subcellular location is the mitochondrion matrix. The catalysed reaction is ATP-independent breakage of single-stranded DNA, followed by passage and rejoining.. Its function is as follows. Releases the supercoiling and torsional tension of DNA introduced during the DNA replication and transcription by transiently cleaving and rejoining one strand of the DNA duplex. Introduces a single-strand break via transesterification at a target site in duplex DNA. The scissile phosphodiester is attacked by the catalytic tyrosine of the enzyme, resulting in the formation of a DNA-(5'-phosphotyrosyl)-enzyme intermediate and the expulsion of a 3'-OH DNA strand. The free DNA strand then undergoes passage around the unbroken strand thus removing DNA supercoils. Finally, in the religation step, the DNA 3'-OH attacks the covalent intermediate to expel the active-site tyrosine and restore the DNA phosphodiester backbone. As an essential component of the RMI complex it is involved in chromosome separation and the processing of homologous recombination intermediates to limit DNA crossover formation in cells. Has DNA decatenation activity. It is required for mtDNA decatenation and segregation after completion of replication, in a process that does not require BLM, RMI1 and RMI2. In Mus musculus (Mouse), this protein is DNA topoisomerase 3-alpha (Top3a).